The chain runs to 163 residues: Large ribosomal subunit protein bL17 (163 aa).

The segment at 127–163 is disordered; sequence VAKKATRTRRSKKSAEAAAPAAVEAPATEEPKAESAE. Positions 129–138 are enriched in basic residues; it reads KKATRTRRSK. Over residues 142 to 154 the composition is skewed to low complexity; the sequence is EAAAPAAVEAPAT.

This sequence belongs to the bacterial ribosomal protein bL17 family. As to quaternary structure, part of the 50S ribosomal subunit. Contacts protein L32.

The polypeptide is Large ribosomal subunit protein bL17 (Bacteroides thetaiotaomicron (strain ATCC 29148 / DSM 2079 / JCM 5827 / CCUG 10774 / NCTC 10582 / VPI-5482 / E50)).